Consider the following 288-residue polypeptide: uncharacterized protein (288 aa).

A run of 4 helical transmembrane segments spans residues leucine 43–isoleucine 63, leucine 190–glutamate 210, glycine 243–isoleucine 263, and leucine 265–leucine 285.

Its subcellular location is the cell membrane. This is an uncharacterized protein from Rickettsia prowazekii (strain Madrid E).